The chain runs to 522 residues: Protein GDS1 (522 aa).

Disordered stretches follow at residues 56 to 88 (ALDD…PKKD), 222 to 268 (QQLE…SSNS), 300 to 391 (LSPS…SHNA), and 433 to 489 (STQT…SRNE). Positions 62–73 (LAGSSFSSSQEI) are enriched in polar residues. Residues 74–88 (KATKPKKDFGAPKKD) show a composition bias toward basic and acidic residues. Composition is skewed to polar residues over residues 222-236 (QQLE…FNSN), 244-260 (SSNQ…SMTD), 300-314 (LSPS…LLTP), and 355-366 (SQSLSVLSTPKK). The segment covering 368 to 378 (SSASLSTFASS) has biased composition (low complexity). Over residues 379-391 (KNISPDSSLSHNA) the composition is skewed to polar residues. Positions 439 to 467 (ESSSESSQYNSSSSSPVNSAAASSAESLS) are enriched in low complexity. The segment covering 468 to 489 (DINSSQDNGRESNPSSQESRNE) has biased composition (polar residues).

In terms of biological role, involved in nuclear control of mitochondria. The polypeptide is Protein GDS1 (GDS1) (Saccharomyces cerevisiae (strain ATCC 204508 / S288c) (Baker's yeast)).